Reading from the N-terminus, the 277-residue chain is Bis(5'-nucleosyl)-tetraphosphatase, symmetrical (277 aa).

It belongs to the Ap4A hydrolase family.

It carries out the reaction P(1),P(4)-bis(5'-adenosyl) tetraphosphate + H2O = 2 ADP + 2 H(+). Hydrolyzes diadenosine 5',5'''-P1,P4-tetraphosphate to yield ADP. In Bordetella pertussis (strain Tohama I / ATCC BAA-589 / NCTC 13251), this protein is Bis(5'-nucleosyl)-tetraphosphatase, symmetrical.